Here is a 237-residue protein sequence, read N- to C-terminus: Opacity protein opA57 (237 aa).

A1 is a signal peptide.

The protein belongs to the opacity porin family.

It localises to the cell outer membrane. In terms of biological role, implicated in a number of adherence functions. OPA proteins are implicated in pathogenesis and are subject to phase variation. This is Opacity protein opA57 (opaK) from Neisseria gonorrhoeae.